Consider the following 245-residue polypeptide: MYRYKITIEYLGTNLAGWQRQAGVISVQQILEEAIYKFSGEQVILFGSGRTDAGVHAIGQVAHFDLSKHLEPHKIITAINYFARPYAVGVWNCELASNNFHARFSATSRHYIYRIINRPYPSVIDLNRAWWISSPLDVLTMQKAAAYLLGKHDFTSFRASSCQSKSPIKTLTELNIIKEDEEIKLYLSAPSFLHHMVRNIVGSLVLVGKNVWQAEQIKDVLEAKDRKAAGPTAPASGLYFVKTEY.

D52 acts as the Nucleophile in catalysis. Residue Y111 coordinates substrate.

Belongs to the tRNA pseudouridine synthase TruA family. In terms of assembly, homodimer.

The enzyme catalyses uridine(38/39/40) in tRNA = pseudouridine(38/39/40) in tRNA. In terms of biological role, formation of pseudouridine at positions 38, 39 and 40 in the anticodon stem and loop of transfer RNAs. This Rickettsia felis (strain ATCC VR-1525 / URRWXCal2) (Rickettsia azadi) protein is tRNA pseudouridine synthase A.